A 407-amino-acid chain; its full sequence is Probable tRNA sulfurtransferase (407 aa).

Positions 61–165 constitute a THUMP domain; that stretch reads NEITYRLSKI…LDAIYMYEEV (105 aa). ATP is bound by residues 183 to 184, 208 to 209, R265, G287, and Q296; these read ML and HF.

It belongs to the ThiI family.

Its subcellular location is the cytoplasm. It catalyses the reaction [ThiI sulfur-carrier protein]-S-sulfanyl-L-cysteine + a uridine in tRNA + 2 reduced [2Fe-2S]-[ferredoxin] + ATP + H(+) = [ThiI sulfur-carrier protein]-L-cysteine + a 4-thiouridine in tRNA + 2 oxidized [2Fe-2S]-[ferredoxin] + AMP + diphosphate. The enzyme catalyses [ThiS sulfur-carrier protein]-C-terminal Gly-Gly-AMP + S-sulfanyl-L-cysteinyl-[cysteine desulfurase] + AH2 = [ThiS sulfur-carrier protein]-C-terminal-Gly-aminoethanethioate + L-cysteinyl-[cysteine desulfurase] + A + AMP + 2 H(+). The protein operates within cofactor biosynthesis; thiamine diphosphate biosynthesis. Its function is as follows. Catalyzes the ATP-dependent transfer of a sulfur to tRNA to produce 4-thiouridine in position 8 of tRNAs, which functions as a near-UV photosensor. Also catalyzes the transfer of sulfur to the sulfur carrier protein ThiS, forming ThiS-thiocarboxylate. This is a step in the synthesis of thiazole, in the thiamine biosynthesis pathway. The sulfur is donated as persulfide by IscS. The polypeptide is Probable tRNA sulfurtransferase (Staphylococcus aureus (strain JH1)).